The chain runs to 551 residues: MASHHHHNHNHVCSRHQNHHNNTPQFATSPNCCNKSNHPSPPPAEDNLLHLVATYLQNHQQETQCSCETSCQNFNVIRSQNRVLRQHKNVPREYDQVVLSCLLRKIDDLESSLNKFSSFYDKRRDRHSTLRDSAARVIQTHFRSYLVHRSISFRQLKELAMIKASFLSLKSSVSGKLIFPFKVVSRKATDLLLQLDSIQGRIDPMIRSSKRSLSRDLVRFVQYVDDCVVKRYGFVVKSGSGIKLNGKKPQGFGTSSEDEDNNADMSDDSEEVPVSSIDKRKVASSKSRTGVVIEGDVVKPPVMKFVVLDKNRNVCQVYGNRHDLTSSAEDDSVDGDEETLVMSRDNGRKQSLKARNGVSVKGGGGKTTRVVKTVSFDENGNVCKVYGDTHDLTSSAEDDDSVDVGEETLVMCRDEGKRRSSKTGSRVLVKGSGGKTNRVVKTVSFDENGNVYKAYGDTPESSIISEEDDSTSGSNEGNGEEKGNVNEVEEIKYVPKENESFEEEEEKETDSENEVSSSEGSEGDKRVTKKEVQHQKGSLMFSPPLPLKMEP.

Residues 1–19 (MASHHHHNHNHVCSRHQNH) are compositionally biased toward basic residues. The disordered stretch occupies residues 1–46 (MASHHHHNHNHVCSRHQNHHNNTPQFATSPNCCNKSNHPSPPPAED). Residues 1–52 (MASHHHHNHNHVCSRHQNHHNNTPQFATSPNCCNKSNHPSPPPAEDNLLHLV) constitute a chloroplast transit peptide. A compositionally biased stretch (polar residues) spans 20 to 38 (HNNTPQFATSPNCCNKSNH). Residues 131 to 160 (RDSAARVIQTHFRSYLVHRSISFRQLKELA) form the IQ domain. Residues 147 to 228 (VHRSISFRQL…RFVQYVDDCV (82 aa)) enclose the BAG domain. A disordered region spans residues 246–281 (GKKPQGFGTSSEDEDNNADMSDDSEEVPVSSIDKRK). A compositionally biased stretch (acidic residues) spans 256–271 (SEDEDNNADMSDDSEE). The residue at position 332 (serine 332) is a Phosphoserine. Disordered regions lie at residues 414–433 (DEGK…KGSG) and 450–551 (NVYK…KMEP). Basic and acidic residues predominate over residues 479 to 499 (GEEKGNVNEVEEIKYVPKENE). The span at 500 to 513 (SFEEEEEKETDSEN) shows a compositional bias: acidic residues. Residues 522–534 (EGDKRVTKKEVQH) are compositionally biased toward basic and acidic residues.

Binds to the ATPase domain of HSP70/HSC70 chaperones.

It is found in the plastid. It localises to the chloroplast. In terms of biological role, co-chaperone that regulates diverse cellular pathways, such as programmed cell death and stress responses. The chain is BAG family molecular chaperone regulator 8, chloroplastic (BAG1) from Arabidopsis thaliana (Mouse-ear cress).